Reading from the N-terminus, the 233-residue chain is MITTRTARQCGQADYGWLQARYTFSFGHYFDPKLLGYASLRVLNQEVLAPGAAFQPRTYPKVDILNVILDGEAEYRDSEGNHVQASAGEALLLSTQPGVSYSEHNLSKDKPLTRMQLWLDACPQRENPLIQKLALNMGKQHLIASPEGAMGSLQLRQQVWLHHIVLDKGESANFQLHGPRTYLQSIHGKFHALTHHEEKAALTCGDGAFIRDEANITLVADSPLRALLIDLPV.

Belongs to the pirin family. As to quaternary structure, monomer.

The protein localises to the cytoplasm. In terms of biological role, does not have quercetin 2,3-dioxygenase activity. This chain is Pirin-like protein YhaK (yhaK), found in Escherichia coli O157:H7.